The following is a 341-amino-acid chain: Cytochrome c biogenesis protein CcsA (341 aa).

Helical transmembrane passes span 16-36, 37-57, 68-88, 97-117, 142-162, 249-269, 276-296, and 310-330; these read LILLLTMLIYWAGAAFPGMSI, LPTLGTAGVAIANLSIATLLG, LSNLYESLFFLAWGVTAVHLI, LVGVVTTPVAMGITAFAALSL, VMMLSYATLMVGAVLAIAFLI, IIGLGFPLLTIGIIAGAVWAN, WSWDPKETWALITWLVFAAYL, and AILAASGFIVVWVCYLGVNLL.

The protein belongs to the CcmF/CycK/Ccl1/NrfE/CcsA family. May interact with ccs1.

It is found in the cellular thylakoid membrane. Its function is as follows. Required during biogenesis of c-type cytochromes (cytochrome c6 and cytochrome f) at the step of heme attachment. The sequence is that of Cytochrome c biogenesis protein CcsA from Rippkaea orientalis (strain PCC 8801 / RF-1) (Cyanothece sp. (strain PCC 8801)).